The chain runs to 172 residues: Diphosphoinositol polyphosphate phosphohydrolase 1 (172 aa).

The residue at position 1 (M1) is an N-acetylmethionine. Substrate-binding positions include R10, 18–20 (KKR), and 39–41 (SSR). The Nudix hydrolase domain maps to 17–142 (YKKRAACLCF…KPVQASYFET (126 aa)). Mg(2+)-binding residues include G50 and E66. Positions 51–72 (GGMEPEEEPSVAAVREVCEEAG) match the Nudix box motif. E69 functions as the Proton acceptor in the catalytic mechanism. Residue E70 participates in Mg(2+) binding. Residues 89–91 (RKH), R115, and K133 each bind substrate.

The protein belongs to the Nudix hydrolase family. DIPP subfamily. Monomer. It depends on Mg(2+) as a cofactor. The cofactor is Mn(2+). Zn(2+) is required as a cofactor. In terms of tissue distribution, widely expressed. Expressed at higher level in brain, heart, pancreas and liver. Also expressed in placenta, lung and kidney.

It is found in the cytoplasm. It localises to the nucleus. The catalysed reaction is diphospho-myo-inositol polyphosphate + H2O = myo-inositol polyphosphate + phosphate.. It carries out the reaction 5-diphospho-1D-myo-inositol 1,2,3,4,6-pentakisphosphate + H2O = 1D-myo-inositol hexakisphosphate + phosphate + H(+). The enzyme catalyses 3,5-bis(diphospho)-1D-myo-inositol 1,2,4,6-tetrakisphosphate + H2O = 3-diphospho-1D-myo-inositol 1,2,4,5,6-pentakisphosphate + phosphate + 2 H(+). It catalyses the reaction [phosphate](n+1) + n H2O = (n+1) phosphate + n H(+). The catalysed reaction is P(1),P(5)-bis(5'-adenosyl) pentaphosphate + H2O = ADP + ATP + 2 H(+). It carries out the reaction P(1),P(6)-bis(5'-adenosyl) hexaphosphate + H2O = 2 ATP + 2 H(+). The enzyme catalyses P(1),P(4)-bis(5'-adenosyl) tetraphosphate + H2O = AMP + ATP + 2 H(+). It catalyses the reaction a 5'-end (N(7)-methyl 5'-triphosphoguanosine)-ribonucleoside in mRNA + H2O = N(7)-methyl-GMP + a 5'-end diphospho-ribonucleoside in mRNA + 2 H(+). The catalysed reaction is a 5'-end (N(7)-methyl 5'-triphosphoguanosine)-ribonucleoside in mRNA + H2O = N(7)-methyl-GDP + a 5'-end phospho-ribonucleoside in mRNA + 2 H(+). Its activity is regulated as follows. Endopolyphospahatase activity is inhibited by NaF, NaPPi, beta-glycerol phosphate and heparin. 5-diphosphoinositol pentakisphosphate (5-InsP7) inhibits its mRNA decapping activity. Its function is as follows. Cleaves a beta-phosphate from the diphosphate groups in PP-InsP5 (diphosphoinositol pentakisphosphate) and [PP]2-InsP4 (bisdiphosphoinositol tetrakisphosphate), suggesting that it may play a role in signal transduction. InsP6 (inositol hexakisphosphate) is not a substrate. Acts as a negative regulator of the ERK1/2 pathway. Also able to catalyze the hydrolysis of dinucleoside oligophosphates, with diadenosine 5',5'''-P1,P6-hexaphosphate (Ap6A) and diadenosine 5',5'''- P1,P5-pentaphosphate (Ap5A) being the preferred substrates. The major reaction products are ADP and p4a from Ap6A and ADP and ATP from Ap5A. Also able to hydrolyze 5-phosphoribose 1-diphosphate. Acts as a decapping enzyme that modulates the stability of a subset of mRNAs implicated in cell motility. Hydrolyzes monomethylated capped RNA after both the alpha- and beta-phosphates generating m7GMP + ppRNA and m7GDP + pRNA. Can hydrolyze unmethylated capped RNAs. Divalent cations zinc, magnesium and manganese determine its substrate specificity. Exhibits diphosphoinositol polyphosphate phosphohydrolase in the presence of magnesium ions, diadenosine hexaphosphate hydrolase activity in the presence of manganese ions and endopolyphosphatase activity in the presence of zinc ions. Plays an important role in limiting DNA damage and maintaining cell survival upon oxidative stress via its endopolyphosphatase activity. The protein is Diphosphoinositol polyphosphate phosphohydrolase 1 of Homo sapiens (Human).